The primary structure comprises 165 residues: Lipoprotein signal peptidase (165 aa).

Helical transmembrane passes span 68–88 and 100–120; these read PLLP…GLFG and GFLL…GEVI. Residues D121 and D137 contribute to the active site. A helical transmembrane segment spans residues 130-150; the sequence is FPVFNIADISINVGLACLIFA.

This sequence belongs to the peptidase A8 family.

The protein localises to the cell inner membrane. It carries out the reaction Release of signal peptides from bacterial membrane prolipoproteins. Hydrolyzes -Xaa-Yaa-Zaa-|-(S,diacylglyceryl)Cys-, in which Xaa is hydrophobic (preferably Leu), and Yaa (Ala or Ser) and Zaa (Gly or Ala) have small, neutral side chains.. The protein operates within protein modification; lipoprotein biosynthesis (signal peptide cleavage). Its function is as follows. This protein specifically catalyzes the removal of signal peptides from prolipoproteins. In Acaryochloris marina (strain MBIC 11017), this protein is Lipoprotein signal peptidase.